Reading from the N-terminus, the 242-residue chain is uncharacterized protein (242 aa).

A signal peptide spans Met-1–Ala-20.

This sequence belongs to the periplasmic pilus chaperone family.

It localises to the periplasm. In terms of biological role, could be required for the biogenesis of the putative YbgD fimbria. This is an uncharacterized protein from Escherichia coli (strain K12).